The following is a 129-amino-acid chain: Large ribosomal subunit protein bL12 (129 aa).

The protein belongs to the bacterial ribosomal protein bL12 family. Homodimer. Part of the ribosomal stalk of the 50S ribosomal subunit. Forms a multimeric L10(L12)X complex, where L10 forms an elongated spine to which 2 to 4 L12 dimers bind in a sequential fashion. Binds GTP-bound translation factors.

Forms part of the ribosomal stalk which helps the ribosome interact with GTP-bound translation factors. Is thus essential for accurate translation. The chain is Large ribosomal subunit protein bL12 from Solidesulfovibrio magneticus (strain ATCC 700980 / DSM 13731 / RS-1) (Desulfovibrio magneticus).